Here is a 263-residue protein sequence, read N- to C-terminus: MKNVMFIGYGSMARKVHEMLPKNIILSTVLVSTRSAEIIKTELGESIAVITSVDDLIETPDLAVEMSGQDGLKEHAIKILGKSIPLGIISVGAFTDEKFAISLADTAEANGVEIHILAGAVAGIDGIHAASFAGLSDVVYQGKKHPSSWKGSHADRLIDYDNLVEPTVFFTGTAREAAALFPDNSNVAATIAIAGVGLDDTTVELIADPTLEYNIHHIMAKGVFGKLEISMAGLPLVENPKTSSLAAFSALRLCCQIDQVIQM.

NAD(+)-binding residues include A120 and N186. H216 is an active-site residue.

This sequence belongs to the L-aspartate dehydrogenase family.

It carries out the reaction L-aspartate + NADP(+) + H2O = oxaloacetate + NH4(+) + NADPH + H(+). It catalyses the reaction L-aspartate + NAD(+) + H2O = oxaloacetate + NH4(+) + NADH + H(+). Its pathway is cofactor biosynthesis; NAD(+) biosynthesis; iminoaspartate from L-aspartate (dehydrogenase route): step 1/1. In terms of biological role, specifically catalyzes the NAD or NADP-dependent dehydrogenation of L-aspartate to iminoaspartate. This is L-aspartate dehydrogenase from Psychrobacter cryohalolentis (strain ATCC BAA-1226 / DSM 17306 / VKM B-2378 / K5).